The primary structure comprises 715 residues: Probable serine/threonine-protein kinase mkcE (715 aa).

Disordered regions lie at residues 1 to 125 (MQKI…SQHQ), 228 to 330 (QLQQ…TTTT), and 366 to 385 (GVDN…PIQP). Over residues 42 to 53 (YDGGGSGSGSGG) the composition is skewed to gly residues. 2 stretches are compositionally biased toward low complexity: residues 54-70 (SSSN…TGGN) and 80-125 (SPSN…SQHQ). A coiled-coil region spans residues 207 to 241 (TGKKNFQQQQLQQLQQQQQQQQLQQQQHQQHNHQI). Residues 367-378 (VDNLSSTTTSLS) show a composition bias toward low complexity. Residues 427-683 (RIGENAEVKG…PTQLLQHPFI (257 aa)) form the Protein kinase domain. ATP contacts are provided by residues 433 to 441 (EVKGAFGTV) and Lys459. Asp550 acts as the Proton acceptor in catalysis.

This sequence belongs to the protein kinase superfamily. STE Ser/Thr protein kinase family. STE20 subfamily. It depends on Mg(2+) as a cofactor.

It carries out the reaction L-seryl-[protein] + ATP = O-phospho-L-seryl-[protein] + ADP + H(+). The enzyme catalyses L-threonyl-[protein] + ATP = O-phospho-L-threonyl-[protein] + ADP + H(+). In Dictyostelium discoideum (Social amoeba), this protein is Probable serine/threonine-protein kinase mkcE.